The following is a 476-amino-acid chain: Glycogen synthase (476 aa).

An ADP-alpha-D-glucose-binding site is contributed by Lys15.

Belongs to the glycosyltransferase 1 family. Bacterial/plant glycogen synthase subfamily.

The enzyme catalyses [(1-&gt;4)-alpha-D-glucosyl](n) + ADP-alpha-D-glucose = [(1-&gt;4)-alpha-D-glucosyl](n+1) + ADP + H(+). The protein operates within glycan biosynthesis; glycogen biosynthesis. Its function is as follows. Synthesizes alpha-1,4-glucan chains using ADP-glucose. In Yersinia pseudotuberculosis serotype IB (strain PB1/+), this protein is Glycogen synthase.